The sequence spans 1498 residues: DNA-directed RNA polymerase subunit beta' (1498 aa).

4 residues coordinate Zn(2+): C67, C69, C82, and C85. Mg(2+) is bound by residues D499, D501, and D503. Zn(2+) is bound by residues C867, C943, C950, and C953.

It belongs to the RNA polymerase beta' chain family. As to quaternary structure, the RNAP catalytic core consists of 2 alpha, 1 beta, 1 beta' and 1 omega subunit. When a sigma factor is associated with the core the holoenzyme is formed, which can initiate transcription. The cofactor is Mg(2+). Zn(2+) serves as cofactor.

The catalysed reaction is RNA(n) + a ribonucleoside 5'-triphosphate = RNA(n+1) + diphosphate. Its function is as follows. DNA-dependent RNA polymerase catalyzes the transcription of DNA into RNA using the four ribonucleoside triphosphates as substrates. The sequence is that of DNA-directed RNA polymerase subunit beta' from Chlorobium luteolum (strain DSM 273 / BCRC 81028 / 2530) (Pelodictyon luteolum).